The primary structure comprises 899 residues: Probable dipeptidyl-aminopeptidase B (899 aa).

Disordered regions lie at residues 1–37 and 51–84; these read MARK…SDGS and KITR…TENS. Residues 1–91 lie on the Cytoplasmic side of the membrane; the sequence is MARKDKDNGP…ENSKRNRGSR (91 aa). Residues 22-37 are compositionally biased toward low complexity; the sequence is SSASFSSTDSLSSDGS. Residues 61-74 are compositionally biased toward basic and acidic residues; it reads NPYRDDDVELERGD. A helical; Signal-anchor for type II membrane protein transmembrane segment spans residues 92-112; it reads LIWVVGLLCLGGWILAFVLFW. At 113–899 the chain is on the vacuolar side; that stretch reads GRRNSELSSS…QQGNSVLPVT (787 aa). 7 N-linked (GlcNAc...) asparagine glycosylation sites follow: N149, N194, N347, N409, N513, N638, and N643. The active-site Charge relay system is S752. N811 is a glycosylation site (N-linked (GlcNAc...) asparagine). Active-site charge relay system residues include D829 and H862.

It belongs to the peptidase S9B family.

Its subcellular location is the vacuole membrane. The enzyme catalyses Release of an N-terminal dipeptide, Xaa-Yaa-|-Zaa-, from a polypeptide, preferentially when Yaa is Pro, provided Zaa is neither Pro nor hydroxyproline.. Functionally, type IV dipeptidyl-peptidase which removes N-terminal dipeptides sequentially from polypeptides having unsubstituted N-termini provided that the penultimate residue is proline. In Talaromyces marneffei (strain ATCC 18224 / CBS 334.59 / QM 7333) (Penicillium marneffei), this protein is Probable dipeptidyl-aminopeptidase B (dapB).